Here is a 769-residue protein sequence, read N- to C-terminus: Elongation factor G, mitochondrial (769 aa).

The N-terminal 42 residues, 1 to 42 (MSKFLRGISSISSASLKARASNFGVFHGVCSARNLHQSRLCL), are a transit peptide targeting the mitochondrion. The region spanning 74 to 356 (TRLRNIGVSA…AVVDYLPQPN (283 aa)) is the tr-type G domain. Residues 83–90 (AHIDSGKT), 154–158 (DTPGH), and 208–211 (NKMD) each bind GTP.

The protein belongs to the TRAFAC class translation factor GTPase superfamily. Classic translation factor GTPase family. EF-G/EF-2 subfamily.

It is found in the mitochondrion. It functions in the pathway protein biosynthesis; polypeptide chain elongation. Functionally, mitochondrial GTPase that catalyzes the GTP-dependent ribosomal translocation step during translation elongation. During this step, the ribosome changes from the pre-translocational (PRE) to the post-translocational (POST) state as the newly formed A-site-bound peptidyl-tRNA and P-site-bound deacylated tRNA move to the P and E sites, respectively. Catalyzes the coordinated movement of the two tRNA molecules, the mRNA and conformational changes in the ribosome. The protein is Elongation factor G, mitochondrial of Debaryomyces hansenii (strain ATCC 36239 / CBS 767 / BCRC 21394 / JCM 1990 / NBRC 0083 / IGC 2968) (Yeast).